The sequence spans 101 residues: MFDQTTNTEVHQLTVGKIETANGTIKPQLLRDAVKRAVTNFFSQLDGQEASEVYEMVLCEVEAPLLDIIMQHTRGNQTRAANMLGINRGTLRKKLKKYGMN.

Residues 77–96 (QTRAANMLGINRGTLRKKLK) constitute a DNA-binding region (H-T-H motif).

Belongs to the transcriptional regulatory Fis family. In terms of assembly, homodimer.

Functionally, activates ribosomal RNA transcription. Plays a direct role in upstream activation of rRNA promoters. The protein is DNA-binding protein Fis of Shewanella frigidimarina (strain NCIMB 400).